A 725-amino-acid polypeptide reads, in one-letter code: Dolichyl-phosphate-mannose--protein mannosyltransferase 5 (725 aa).

The next 6 membrane-spanning stretches (helical) occupy residues 34–54, 117–137, 145–165, 192–212, 219–239, and 256–276; these read QFAVFSILLISLIRLYKLYIP, YLWLRLFSGICGIGHVLLTFF, SVISIVITILICLENSMVTVS, IPFTGCWYFNLFVTGIALGLN, GLFTFAWVGILTCVQLWEILG, and VVAFIMVPLTIYCSVFYIHFE. MIR domains follow at residues 303-356, 368-427, and 439-495; these read PLQV…IETK, QREV…IRML, and LIKL…VESS. An N-linked (GlcNAc...) asparagine glycan is attached at Asn409. 4 helical membrane passes run 570 to 590, 619 to 639, 644 to 664, and 673 to 693; these read IYYLGNVAIYYSVFFVGLIAI, FYNNSWPYLVGWFINYIPYCL, LYLHHYLSALNFGILLLSQYL, and IIGGIITATIFVSAIYCFYEF.

The protein belongs to the glycosyltransferase 39 family.

It is found in the endoplasmic reticulum membrane. The enzyme catalyses a di-trans,poly-cis-dolichyl beta-D-mannosyl phosphate + L-seryl-[protein] = 3-O-(alpha-D-mannosyl)-L-seryl-[protein] + a di-trans,poly-cis-dolichyl phosphate + H(+). It carries out the reaction a di-trans,poly-cis-dolichyl beta-D-mannosyl phosphate + L-threonyl-[protein] = 3-O-(alpha-D-mannosyl)-L-threonyl-[protein] + a di-trans,poly-cis-dolichyl phosphate + H(+). The protein operates within protein modification; protein glycosylation. In terms of biological role, protein mannosyltransferase (PMT) involved in hyphal morphogenesis and drug sensitivity. Transfers mannose from Dol-P-mannose to Ser or Thr residues on proteins. PMT1, PMT2 and PMT4 account for most of the protein-O-glycosylation activity, while PMT5 and PMT6 may specifically modulate a much narrower spectrum of target proteins. Required for biofilm formation. In Candida albicans (strain SC5314 / ATCC MYA-2876) (Yeast), this protein is Dolichyl-phosphate-mannose--protein mannosyltransferase 5.